Here is a 1359-residue protein sequence, read N- to C-terminus: ABC transporter C family member 1 (1359 aa).

The 284-residue stretch at 111–394 (NKLTIFLQIL…LPNSIQQLQS (284 aa)) folds into the ABC transmembrane type-1 1 domain. 6 consecutive transmembrane segments (helical) span residues 119 to 139 (ILTNILSILSPLSLKYFIQFI), 147 to 167 (SFLAGIGYCILLLIASFSYTF), 214 to 234 (LLSVDVGIISNFFWIEHMGIF), 244 to 264 (LALLCWVIGWSGLVGFAIMVI), 332 to 352 (MIFWIFAEMMKQAVNAIVLVL), and 363 to 383 (ITLEVAFTTISIFVSLRIPLL). A disordered region spans residues 409-478 (PEIQQNHSSN…QQQQQQQQQQ (70 aa)). The span at 420 to 433 (EEEEEDEYDDDINS) shows a compositional bias: acidic residues. The segment covering 440 to 450 (HNGSFNWNQVD) has biased composition (polar residues). Positions 459 to 478 (GNQQQQQQQQQQQQQQQQQQ) are enriched in low complexity. In terms of domain architecture, ABC transporter 1 spans 470–690 (QQQQQQQQQQ…IDFESIMKTK (221 aa)). An ATP-binding site is contributed by 502–509 (GVVGSGKT). Residues 763 to 1061 (LRVYKEYFKH…LEVKMNSVER (299 aa)) form the ABC transmembrane type-1 2 domain. 5 helical membrane passes run 773-793 (GSSIPLFIMTCIVYMISQIIY), 819-839 (IYLLFIVGFIIFLVIRYFMMA), 884-904 (VDLLLFDLFSDVLYCGSTVLV), 906-926 (IGIMIYISPLIIIPFLLLIGI), and 999-1021 (WVAVRLEFISSIVVFLAAFFSLF). Residues 1073–1102 (NSKINFFRNEQQEEEEEEEEEFDFDNDDYD) are a coiled coil. In terms of domain architecture, ABC transporter 2 spans 1116–1350 (IEFRNVEIKY…QESRFSKLVK (235 aa)). 1150 to 1157 (GRTGAGKS) provides a ligand contact to ATP.

It belongs to the ABC transporter superfamily. ABCC family. Conjugate transporter (TC 3.A.1.208) subfamily.

Its subcellular location is the membrane. The chain is ABC transporter C family member 1 (abcC1) from Dictyostelium discoideum (Social amoeba).